The sequence spans 103 residues: MYAIVKTGGKQYKVSEGDVLFVEKLEANAGDVVTLNEVLACSKDGELKLGSPVVEGASVQAKVVEQGKAKKVIVFKYKAKKDYRRKQGHRQSYTKIVVEKINA.

The protein belongs to the bacterial ribosomal protein bL21 family. In terms of assembly, part of the 50S ribosomal subunit. Contacts protein L20.

Its function is as follows. This protein binds to 23S rRNA in the presence of protein L20. This chain is Large ribosomal subunit protein bL21, found in Clostridioides difficile (strain 630) (Peptoclostridium difficile).